A 371-amino-acid chain; its full sequence is 4-hydroxy-3-methylbut-2-en-1-yl diphosphate synthase (flavodoxin) (371 aa).

4 residues coordinate [4Fe-4S] cluster: cysteine 270, cysteine 273, cysteine 305, and glutamate 312.

The protein belongs to the IspG family. [4Fe-4S] cluster is required as a cofactor.

It carries out the reaction (2E)-4-hydroxy-3-methylbut-2-enyl diphosphate + oxidized [flavodoxin] + H2O + 2 H(+) = 2-C-methyl-D-erythritol 2,4-cyclic diphosphate + reduced [flavodoxin]. It participates in isoprenoid biosynthesis; isopentenyl diphosphate biosynthesis via DXP pathway; isopentenyl diphosphate from 1-deoxy-D-xylulose 5-phosphate: step 5/6. Converts 2C-methyl-D-erythritol 2,4-cyclodiphosphate (ME-2,4cPP) into 1-hydroxy-2-methyl-2-(E)-butenyl 4-diphosphate. In Chromohalobacter salexigens (strain ATCC BAA-138 / DSM 3043 / CIP 106854 / NCIMB 13768 / 1H11), this protein is 4-hydroxy-3-methylbut-2-en-1-yl diphosphate synthase (flavodoxin).